The chain runs to 3674 residues: MLFSGASTAKPKKDEKKDKKSDRDPKNELQEWVFVRWANHLLGTERLTDYKSLQDGSNAIFVYQAIIGQTMAVLGNPSDDWPNVLQNIGDSKTNPQEVMEGQQKAVLSAWWQLVQFFWKNNAPVQLREEKLSEAIKQWCIEVMKSYEEIDVYDFTSSFRDGHAFNYLIHSYDRKLINLTKTAEMSAIDRIENAFAVAEKTWNVPRLLNPKDLHSDQLDSHSVLCYLMSLYLAMISTSKIETELEAQQIQQQKVAALLASHKMLSSQPSTSSSSALQIPPQTPPTAHHQAMLDRGKSFEQSAEGEVRSRKSSSSSQKSGKSKKARREEQLAEFKSCIEQVLTWLLEAEDELTTLTQMPRVELASVRSQFSDFESFMSSLTDSQDTVGRVLLRGQMLSNKSESEEEKESIGANLHLVNTRWEALREQAMQEQAVLQQQIHLLQQSELDTISQWLDAAELEIESFGPLAADSSQALRQIELHTKFQQKLNDFQETIDKLESFVAVVDEENDASVATLEDALSAVSVRWGHVCEWAEKRATKLDGLADLLDKTNEVFENLSGWLAERENELMTGLKSAHHLENEEQVAQQVRRLQKTEEQLEQEHASFVRLSQLSCELVGRLDDSNGAAANAVRLSLDSITQRWDNLVARIEEHGKTLVKSGKADVKQVQESQNEQKEQPASSEGLSTDTEGEEQKNQLVDKFLLHISKLSHELEPLQDWSEKFEVSRKKDDIRKMMNTCQEKLIQIKEQEARVNRLQLELEHLHVAKLNARQLKRANDAFEQFAKGWARIVTKISEAMNVLTGQEAGGNGNGSEEAAVAAKIEQWIEAVDKVINELSQLPVNERRSRIDKLEQQLQVQDKNVGFIEKDLLKKAILKKGLEIAGKRLAALKVEEKPVEKEEQLVLSNSEEPEAEKHVTFVQETTEKPAPLQEPTSEAQLLEELDGPWSRVGDVVAIEHDLLRAKRAVDTARNSQMSNETVEKAETRKAEMEEKRRVTMSARSKFRMAEETLEEIERNLDRLQVSDLEIADLVRGLEQEAAKLGERVSQRKEAERTAEKILSMDDDEISQEIVIKTKDSTEKLIKRWNQLELDLEENLRKAKRDQDVFIQKRLREGEEALNEIKTAIEGKRESLDAETAAENLDHLESSLDNISSLFGEIGSLPMDDNSREKLSKLAKAKDQITARANEALAALTRTVSECEDFEKQIMLFQNWSARIGFLLQARKSADISAFDIPHEYHEDLGNEAELIPKLSREFEEWTVKLNEMNSTATEKDDSARMREQLNHANETMAELKRKFNEFKRPKGFEEKLEKVITTLSNVEMGLDDTTGIDGSECGGALMEVRALVRMLDGAQEKWKDLAENREQLVKDRVLDEETSKETLQKLQYAKTKSKELYERSSTCIERLEDCVEMYQRLKMESDEIERFLEEMEGKLDQYAASDRPEEAEIVNELISEWNRNEAAMKNAEHLQRQLNERAIKIPDDVLSLKRLRADALKNRLNSWCRTIQEMSEDDESALLEIDELHQNLEKELKLVSDKEPSKIAEKLRFLRADRDRLSSRTRKLAAKNPRLAATSSDVLAGLNQKWKELEVKASAEKAPAPELRDARLSSPSEQPFDKRVQELCDLFENLEAQLDFNGSPVSMVTEYQKRVENLDEYLDEYRPALDDTIEEGRKIAETGRLELQTHSAIEKLDELTNRIEQVEVELDKHRDKVPSLVEQHEQLKKDIDSFLLVLDVFTDRNLDDVDIAKSTRKELAERDSHIVSLTSRATAIHCALPGKGPQLHDVTLDKLRDRIEKLEARLSATEKKPVETVKSTIPDRPEVPEEPEKSSPDRTSRSSLQLAMEAYGTATEDDSVISEAVTVGQKSVDQVDPVEQLEPVEPVEPKLEVKQLKDEATEEEEKRTIILPDETEKVIETIPAARPSAGPSEGTVAEVSTSEILKARPAQESIERTVREVPVDEYEETANISSGDELQDHKISSAVPDSESEIASMFEVLDSIEDSHTNFEEFPFDYLDSADDDLKKTLLKLESCEKTLAKNEMTINIAQAENARERITMLRQMALQRKDKLPKFNEEWNAMQELIQLADALVDEAERYESDQIPQMDRKSAPNVLGELRKRVANAEGPVIDLVKKLSQLVPRMQEDSPKSQDIRQKVYGIEDRFRRVGQAEGAAISKALSSALTEPELKLELDEVVRWCEMAEKEAAQNVNSLDGDGLEKLDGRLAQFTKELQERKDDMVQLEMAKNMIIPSLKGDAHHDLRRNFSDTAKRVAMVRDELSDAHKWVATSRDTCDTFWADIDSLEQLARDVVRRANGIRMAVIYTPSRENVEGVLRDVQRLKMSIGDVKKRVQTANLPPAIKLAGKNAKRVVQVLTETATTIADCHDIPTYLIDEMNDSGGDTTESRSTVVEMTSVHTKQSSSSSSNKTPSAGGESDDAHTLNGDDEQSEEDQKIYSRESSSTLPRGVSSLGSTGSSGVLDPVAVQLTHTRHWLHDVERDASITVDLAQWQPARELWQSIQGIIDEIRLRSVHVTGAHDASPNRQVRQQAAQLLTEMRRTIENCEKRCLILNQISDIARQNEASRNEMELWLKSASDVIGERRVEELSEEVVRQELQVLERVVEQLTERKDKMAEINSQANKIVDTYTKDEAHNLSHLLSRLNMSWTKFNDNIRIRRAVLEASLRSRRDFHSALSEFEKWLSRQEDNCSKLSADTSNHQAIKDTSKRKNWTQSFKTLNAELNAHEDVMKSVEKMGKMLAESLESGNEKVELLKRVGETTRRWTALRKTTNEIGERLEKAEQEWEKLSDGLADLLSWVEAKKQAIMDEQPTGGSLSAVMQQASFVKGLQREIESKTANYKSTVEEAHSFLMQHDLRPKLHSPHVLDDDYEKEELANLEQRRRGLEINANCERLKKNWAELGIEVESWDKLVQHAMQRLQELERNLAECQLHLTSSENEIETMKAVEKIHLEDLKIAREETDQISKRIDEVRLFVDDVNDAAARLLAEDLKLDEHAKGQIEHVNKRYSTLKRAIRIRQAAVRNAASDFGPTSEHFLNQSVTLPWQRAISKSNLLPYYIEQTSEKTQWEHPVWVEIVKELSQFNRVKFLAYRTAMKLRALQKRLCLDLVDLTLLEKAFVRLKGLSAEECPGLEGMVCALLPMYEALHAKYPNQVQSVSLAVDICINFLLNLFDQSRDGIMRVLSFKIAMIVFSNIPLEEKYRYLFKLVSQDGHATQKQIALLLYDLIHIPRLVGESAAFGGTNVEPSVRSCFETVRLAPTISEGAFIDWVKKEPQSIVWLAVMHRLVISESTKHASKCNVCKMFPIIGIRYRCLTCFNCDLCQNCFFSQRTAKSHRTNHPMQEYCEKTTSSDDARDFAKMIRNKFRASKRQKGYLPIDVAEEGIPLTCPPAKVTNQATEQMNADTSQMTAHLAKLSAEHGGGAEHMEPVQSPLQIINQVEQLQRDEMDQMLHRLQFENKQLRKELEWKRGAASTMEIDRSSKRHQERHQSESRGGTLPLRNGRSVVSLKSTQSQNDVMDEAKALRLHKQRLEHRSRILEQQNEQLEMQLQRLKKVIDAQKQQAPLSTNSLLRGSHHQPWSPERARSGSASTLDRGLIVSSRHQEQAEAAGGGAEDSSDEAGGAGGGPRGSSVGQMQNLMTACDDLGKAMESLVVSVVYDSDDEEND.

The segment at 1–25 (MLFSGASTAKPKKDEKKDKKSDRDP) is disordered. A compositionally biased stretch (basic and acidic residues) spans 11–25 (PKKDEKKDKKSDRDP). Residues 30–39 (QEWVFVRWAN) form an actin-binding region. The Calponin-homology (CH) domain occupies 129-234 (EKLSEAIKQW…YLMSLYLAMI (106 aa)). The disordered stretch occupies residues 265–325 (SQPSTSSSSA…KSGKSKKARR (61 aa)). Spectrin repeat units follow at residues 327–435 (EQLA…VLQQ), 436–541 (QIHL…KLDG), and 612–656 (CELV…TLVK). Basic and acidic residues predominate over residues 655-674 (VKSGKADVKQVQESQNEQKE). Disordered regions lie at residues 655–689 (VKSG…TEGE), 968–991 (NSQM…EKRR), 1587–1606 (ASAE…SSPS), 1796–1833 (LSAT…SRSS), and 2387–2466 (MNDS…GSTG). Residues 675–685 (QPASSEGLSTD) show a composition bias toward polar residues. Basic and acidic residues predominate over residues 975-991 (TVEKAETRKAEMEEKRR). Over residues 1796–1830 (LSATEKKPVETVKSTIPDRPEVPEEPEKSSPDRTS) the composition is skewed to basic and acidic residues. Polar residues predominate over residues 2391 to 2411 (GGDTTESRSTVVEMTSVHTKQ). Spectrin repeat units follow at residues 2576–2673 (RNEM…VLEA), 2725–2789 (FKTL…RLEK), 2792–2905 (QEWE…RLKK), and 2926–3032 (QRLQ…AVRN). One can recognise a WW domain in the interval 3047–3081 (QSVTLPWQRAISKSNLLPYYIEQTSEKTQWEHPVW). The segment at 3301–3357 (KHASKCNVCKMFPIIGIRYRCLTCFNCDLCQNCFFSQRTAKSHRTNHPMQEYCEKTT) adopts a ZZ-type zinc-finger fold. Zn(2+)-binding residues include C3306, C3309, C3321, C3324, C3330, C3333, H3343, and H3347. Disordered stretches follow at residues 3481–3522 (STME…TQSQ) and 3568–3645 (KQQA…QMQN). Positions 3568–3579 (KQQAPLSTNSLL) are enriched in polar residues.

As to quaternary structure, component of the dystrophin glycoprotein complex (DGC). Interacts with dyb-1 and stn-1 to form the DGC. Interacts with stn-2. Expressed in body wall, head, pharyngeal and vulval muscles, from late embryogenesis to adulthood (at protein level).

It localises to the cell membrane. Its subcellular location is the sarcolemma. The protein resides in the cytoplasm. It is found in the cytoskeleton. Its function is as follows. Plays a role in cholinergic transmission and as a functional partner of dystrobrevin (dyb-1), necessary for muscle maintenance. Required for neuronal positioning. May play a role in the localization of slo-1 near dense bodies in the muscle. The protein is Dystrophin-1 (dys-1) of Caenorhabditis elegans.